A 399-amino-acid chain; its full sequence is Methylthioribose kinase (399 aa).

ATP-binding positions include Asn40, Lys57, and 111–113 (EDL). Asp229 lines the substrate pocket. 246-248 (DAE) is a binding site for ATP. Arg344 is a substrate binding site.

Belongs to the methylthioribose kinase family. Homodimer.

It catalyses the reaction 5-(methylsulfanyl)-D-ribose + ATP = 5-(methylsulfanyl)-alpha-D-ribose 1-phosphate + ADP + H(+). Its pathway is amino-acid biosynthesis; L-methionine biosynthesis via salvage pathway; S-methyl-5-thio-alpha-D-ribose 1-phosphate from S-methyl-5'-thioadenosine (hydrolase route): step 2/2. Functionally, catalyzes the phosphorylation of methylthioribose into methylthioribose-1-phosphate. The chain is Methylthioribose kinase from Klebsiella pneumoniae (strain 342).